The primary structure comprises 91 residues: Small ribosomal subunit protein uS19 (91 aa).

The protein belongs to the universal ribosomal protein uS19 family.

Its function is as follows. Protein S19 forms a complex with S13 that binds strongly to the 16S ribosomal RNA. This chain is Small ribosomal subunit protein uS19, found in Chromohalobacter salexigens (strain ATCC BAA-138 / DSM 3043 / CIP 106854 / NCIMB 13768 / 1H11).